Reading from the N-terminus, the 389-residue chain is Alpha-(1,3)-fucosyltransferase 7 (389 aa).

The Cytoplasmic segment spans residues 1–55 (MPTPCPPACLSTPGTHRLLPFPDWKAPSWESRKEATCNSSSPGPWAEPTVQGYHP). A helical; Signal-anchor for type II membrane protein transmembrane segment spans residues 56-78 (TRRLRAWGGLAGGATFMVIWFFW). Residues 79–389 (LWGSAPGSAP…YEDLESWFQA (311 aa)) lie on the Lumenal side of the membrane. The cysteines at positions 115 and 123 are disulfide-linked. The N-linked (GlcNAc...) asparagine glycan is linked to N128. Residues C258 and C261 are joined by a disulfide bond. N338 carries N-linked (GlcNAc...) asparagine glycosylation. Residues C365 and C368 are joined by a disulfide bond.

This sequence belongs to the glycosyltransferase 10 family. N-glycosylated. Highly expressed in lung and bone marrow and to a much lesser extent in spleen, salivary gland and skeletal muscle.

The protein resides in the golgi apparatus. It localises to the golgi stack membrane. It carries out the reaction an N-acetyl-alpha-neuraminyl-(2-&gt;3)-beta-D-galactosyl-(1-&gt;4)-N-acetyl-beta-D-glucosaminyl derivative + GDP-beta-L-fucose = an alpha-Neu5Ac-(2-&gt;3)-beta-D-Gal-(1-&gt;4)-[alpha-L-Fuc-(1-&gt;3)]-beta-D-GlcNAc derivative + GDP + H(+). The enzyme catalyses an alpha-Neu5Ac-(2-&gt;3)-beta-D-Gal-(1-&gt;4)-beta-D-GlcNAc6S derivative + GDP-beta-L-fucose = an alpha-Neu5Ac-(2-&gt;3)-beta-D-Gal-(1-&gt;4)-[alpha-L-Fuc-(1-&gt;3)]-beta-D-GlcNAc6S derivative + GDP + H(+). The catalysed reaction is a neolactoside IV(3)-alpha-NeuAc-nLc4Cer + GDP-beta-L-fucose = a neolactoside IV(3)-alpha-NeuNAc,III(3)-alpha-Fuc-nLc4Cer + GDP + H(+). It catalyses the reaction a neolactoside VI(3)-alpha-NeuNAc-nLc6Cer + GDP-beta-L-fucose = a neolactoside VI(3)-alpha-NeuAc,V(3)-alphaFuc-nLc6Cer + GDP + H(+). It carries out the reaction an alpha-Neu5Ac-(2-&gt;3)-beta-D-Gal-(1-&gt;4)-beta-D-GlcNAc-(1-&gt;3)-beta-D-Gal-(1-&gt;4)-[alpha-L-Fuc-(1-&gt;3)]-beta-D-GlcNAc derivative + GDP-beta-L-fucose = an alpha-Neu5Ac-(2-&gt;3)-beta-D-Gal-(1-&gt;4)-[alpha-L-Fuc-(1-&gt;3)]-beta-D-GlcNAc-(1-&gt;3)-beta-D-Gal-(1-&gt;4)-[alpha-L-Fuc-(1-&gt;3)]-beta-D-GlcNAc derivative + GDP + H(+). The enzyme catalyses alpha-Neu5Ac-(2-&gt;3)-beta-D-Gal-(1-&gt;4)-beta-D-GlcNAc-(1-&gt;3)-beta-D-Gal-(1-&gt;4)-D-Glc + GDP-beta-L-fucose = alpha-Neu5Ac-(2-&gt;3)-beta-D-Gal-(1-&gt;4)-[alpha-L-Fuc-(1-&gt;3)]-beta-D-GlcNAc-(1-&gt;3)-beta-D-Gal-(1-&gt;4)-D-Glc + GDP + H(+). The catalysed reaction is alpha-Neu5Ac-(2-&gt;3)-beta-D-Gal-(1-&gt;4)-beta-D-GlcNAc-(1-&gt;3)-beta-D-Gal-(1-&gt;4)-[alpha-L-Fuc-(1-&gt;3)]-beta-D-GlcNAc-(1-&gt;3)-beta-D-Gal-(1-&gt;4)-beta-D-GlcNAc + GDP-beta-L-fucose = alpha-Neu5Ac-(2-&gt;3)-beta-D-Gal-(1-&gt;4)-[alpha-L-Fuc-(1-&gt;3)]-beta-D-GlcNAc-(1-&gt;3)-beta-D-Gal-(1-&gt;4)-[alpha-L-Fuc-(1-&gt;3)]-beta-D-GlcNAc-(1-&gt;3)-beta-D-Gal-(1-&gt;4)-beta-D-GlcNAc + GDP + H(+). It catalyses the reaction alpha-Neu5Ac-(2-&gt;3)-beta-D-Gal-(1-&gt;4)-beta-D-GlcNAc-(1-&gt;3)-beta-D-Gal-(1-&gt;4)-beta-D-GlcNAc-(1-&gt;3)-beta-D-Gal-(1-&gt;4)-beta-D-GlcNAc + GDP-beta-L-fucose = alpha-Neu5Ac-(2-&gt;3)-beta-D-Gal-(1-&gt;4)-[alpha-L-Fuc-(1-&gt;3)]-beta-D-GlcNAc-(1-&gt;3)-beta-D-Gal-(1-&gt;4)-beta-D-GlcNAc-(1-&gt;3)-beta-D-Gal-(1-&gt;4)-beta-D-GlcNAc + GDP + H(+). It functions in the pathway protein modification; protein glycosylation. Inhibited by NaCl. Inhibited by GDP in a concentration dependent manner, with an IC(50) value of 93 uM. Also inhibited by GMP and GTP. Inhibited by N-ethylmaleimide. Activated by poly(ethylene glycol) by enhancing the thermal stability of FUT7. Activated by Mn2+, Ca2+, and Mg2+. Both panosialin A and B inhibit activity with IC(50) values of 4.8 and 5.3 ug/ml, respectively. Inhibited by gallic acid (GA) and (-)-epigallocatechin gallate (EGCG) in a time-dependent and irreversible manner with IC(50) values of 60 and 700 nM, respectively. Catalyzes the transfer of L-fucose, from a guanosine diphosphate-beta-L-fucose, to the N-acetyl glucosamine (GlcNAc) of a distal alpha2,3 sialylated lactosamine unit of a glycoprotein or a glycolipid-linked sialopolylactosamines chain through an alpha-1,3 glycosidic linkage and participates in the final fucosylation step in the biosynthesis of the sialyl Lewis X (sLe(x)), a carbohydrate involved in cell and matrix adhesion during leukocyte trafficking and fertilization. In vitro, also synthesizes sialyl-dimeric-Lex structures, from VIM-2 structures and both di-fucosylated and trifucosylated structures from mono-fucosylated precursors. However does not catalyze alpha 1-3 fucosylation when an internal alpha 1-3 fucosylation is present in polylactosamine chain and the fucosylation rate of the internal GlcNAc residues is reduced once fucose has been added to the distal GlcNAc. Also catalyzes the transfer of a fucose from GDP-beta-fucose to the 6-sulfated a(2,3)sialylated substrate to produce 6-sulfo sLex mediating significant L-selectin-dependent cell adhesion. Through sialyl-Lewis(x) biosynthesis, can control SELE- and SELP-mediated cell adhesion with leukocytes and allows leukocytes tethering and rolling along the endothelial tissue thereby enabling the leukocytes to accumulate at a site of inflammation. May enhance embryo implantation through sialyl Lewis X (sLeX)-mediated adhesion of embryo cells to endometrium. May affect insulin signaling by up-regulating the phosphorylation and expression of some signaling molecules involved in the insulin-signaling pathway through SLe(x) which is present on the glycans of the INSRR alpha subunit. This chain is Alpha-(1,3)-fucosyltransferase 7, found in Mus musculus (Mouse).